Here is a 209-residue protein sequence, read N- to C-terminus: Large ribosomal subunit protein uL3 (209 aa).

An N5-methylglutamine modification is found at Q150.

Belongs to the universal ribosomal protein uL3 family. In terms of assembly, part of the 50S ribosomal subunit. Forms a cluster with proteins L14 and L19. Methylated by PrmB.

In terms of biological role, one of the primary rRNA binding proteins, it binds directly near the 3'-end of the 23S rRNA, where it nucleates assembly of the 50S subunit. This chain is Large ribosomal subunit protein uL3, found in Cronobacter sakazakii (strain ATCC BAA-894) (Enterobacter sakazakii).